The chain runs to 228 residues: 3-dehydroquinate dehydratase (228 aa).

Residues Ser26, 51–53 (EIR), and Arg84 each bind 3-dehydroquinate. Residue His127 is the Proton donor/acceptor of the active site. The active-site Schiff-base intermediate with substrate is Lys150. 3 residues coordinate 3-dehydroquinate: Arg190, Thr209, and Gln213.

Belongs to the type-I 3-dehydroquinase family. As to quaternary structure, homodimer.

The enzyme catalyses 3-dehydroquinate = 3-dehydroshikimate + H2O. It functions in the pathway metabolic intermediate biosynthesis; chorismate biosynthesis; chorismate from D-erythrose 4-phosphate and phosphoenolpyruvate: step 3/7. Its function is as follows. Involved in the third step of the chorismate pathway, which leads to the biosynthesis of aromatic amino acids. Catalyzes the cis-dehydration of 3-dehydroquinate (DHQ) and introduces the first double bond of the aromatic ring to yield 3-dehydroshikimate. The polypeptide is 3-dehydroquinate dehydratase (Thermoplasma acidophilum (strain ATCC 25905 / DSM 1728 / JCM 9062 / NBRC 15155 / AMRC-C165)).